The sequence spans 222 residues: N-(5'-phosphoribosyl)anthranilate isomerase (222 aa).

Belongs to the TrpF family.

It catalyses the reaction N-(5-phospho-beta-D-ribosyl)anthranilate = 1-(2-carboxyphenylamino)-1-deoxy-D-ribulose 5-phosphate. It participates in amino-acid biosynthesis; L-tryptophan biosynthesis; L-tryptophan from chorismate: step 3/5. The sequence is that of N-(5'-phosphoribosyl)anthranilate isomerase from Beijerinckia indica subsp. indica (strain ATCC 9039 / DSM 1715 / NCIMB 8712).